A 262-amino-acid polypeptide reads, in one-letter code: Phosphatidylglycerol--prolipoprotein diacylglyceryl transferase (262 aa).

The next 4 membrane-spanning stretches (helical) occupy residues 9-29 (LGPLAIRWYALCIVTGLILAV), 41-61 (IIPDDILDFILVAFPLAILGA), 80-100 (IFAIWNGGLAIYGGLITGALV), and 109-129 (LINTWDFLDIAAPSVMIAQSL). Residue arginine 131 participates in a 1,2-diacyl-sn-glycero-3-phospho-(1'-sn-glycerol) binding. 3 helical membrane-spanning segments follow: residues 167 to 187 (QPTFLYESLWNLLGFALILIF), 197 to 217 (GHITAFYLIWYGFGRMVIEGM), and 226 to 246 (GLRVSQWLSVVFIGLGIMIVI).

This sequence belongs to the Lgt family.

The protein resides in the cell membrane. It catalyses the reaction L-cysteinyl-[prolipoprotein] + a 1,2-diacyl-sn-glycero-3-phospho-(1'-sn-glycerol) = an S-1,2-diacyl-sn-glyceryl-L-cysteinyl-[prolipoprotein] + sn-glycerol 1-phosphate + H(+). Its pathway is protein modification; lipoprotein biosynthesis (diacylglyceryl transfer). Functionally, catalyzes the transfer of the diacylglyceryl group from phosphatidylglycerol to the sulfhydryl group of the N-terminal cysteine of a prolipoprotein, the first step in the formation of mature lipoproteins. The sequence is that of Phosphatidylglycerol--prolipoprotein diacylglyceryl transferase from Streptococcus pneumoniae (strain ATCC 700669 / Spain 23F-1).